The chain runs to 172 residues: Shikimate kinase (172 aa).

14-19 (GAGKST) is a binding site for ATP. Serine 18 serves as a coordination point for Mg(2+). Aspartate 36, arginine 60, and glycine 82 together coordinate substrate. Arginine 120 provides a ligand contact to ATP. Substrate is bound at residue arginine 140. Glutamine 157 is an ATP binding site.

It belongs to the shikimate kinase family. As to quaternary structure, monomer. Mg(2+) serves as cofactor.

It localises to the cytoplasm. The enzyme catalyses shikimate + ATP = 3-phosphoshikimate + ADP + H(+). Its pathway is metabolic intermediate biosynthesis; chorismate biosynthesis; chorismate from D-erythrose 4-phosphate and phosphoenolpyruvate: step 5/7. Functionally, catalyzes the specific phosphorylation of the 3-hydroxyl group of shikimic acid using ATP as a cosubstrate. In Colwellia psychrerythraea (strain 34H / ATCC BAA-681) (Vibrio psychroerythus), this protein is Shikimate kinase.